The following is a 296-amino-acid chain: Putative S-adenosyl-L-methionine-dependent methyltransferase MAP_3881 (296 aa).

Residues Asp121 and Asp150–Leu151 contribute to the S-adenosyl-L-methionine site.

This sequence belongs to the UPF0677 family.

Its function is as follows. Exhibits S-adenosyl-L-methionine-dependent methyltransferase activity. This is Putative S-adenosyl-L-methionine-dependent methyltransferase MAP_3881 from Mycolicibacterium paratuberculosis (strain ATCC BAA-968 / K-10) (Mycobacterium paratuberculosis).